The following is a 108-amino-acid chain: Large ribosomal subunit protein uL24 (108 aa).

The interval 46–65 is disordered; that stretch reads RHTRVQQSSRGSQSGGIVTQ. Residues 51–61 are compositionally biased toward low complexity; the sequence is QQSSRGSQSGG.

Belongs to the universal ribosomal protein uL24 family. In terms of assembly, part of the 50S ribosomal subunit.

Its function is as follows. One of two assembly initiator proteins, it binds directly to the 5'-end of the 23S rRNA, where it nucleates assembly of the 50S subunit. Functionally, one of the proteins that surrounds the polypeptide exit tunnel on the outside of the subunit. This chain is Large ribosomal subunit protein uL24, found in Parafrankia sp. (strain EAN1pec).